The chain runs to 183 residues: MDPSQNPNIVHATTIISVRRGGHVAVAGDGQVTLGHTVMKGNARKVRRLGREGQVLAGFAGAAADAFTLFELFEAKLDKHGQLTRAAVELAKDWRTERRLGKLEALLAVADKETSLIISGTGDVIEPEDGIIAIGSGGSYALSAARALLAHTELDAKTIATEAINIAGDICIYTNRNVVVEEL.

T13 is a catalytic residue. The Na(+) site is built by G168, C171, and T174.

The protein belongs to the peptidase T1B family. HslV subfamily. A double ring-shaped homohexamer of HslV is capped on each side by a ring-shaped HslU homohexamer. The assembly of the HslU/HslV complex is dependent on binding of ATP.

It localises to the cytoplasm. It catalyses the reaction ATP-dependent cleavage of peptide bonds with broad specificity.. With respect to regulation, allosterically activated by HslU binding. Protease subunit of a proteasome-like degradation complex believed to be a general protein degrading machinery. The chain is ATP-dependent protease subunit HslV from Xanthomonas euvesicatoria pv. vesicatoria (strain 85-10) (Xanthomonas campestris pv. vesicatoria).